The primary structure comprises 305 residues: tRNA dimethylallyltransferase (305 aa).

11–18 serves as a coordination point for ATP; that stretch reads GPTAVGKT. 13-18 contacts substrate; the sequence is TAVGKT. The interaction with substrate tRNA stretch occupies residues 36–39; that stretch reads DSMQ.

It belongs to the IPP transferase family. In terms of assembly, monomer. Requires Mg(2+) as cofactor.

It carries out the reaction adenosine(37) in tRNA + dimethylallyl diphosphate = N(6)-dimethylallyladenosine(37) in tRNA + diphosphate. Functionally, catalyzes the transfer of a dimethylallyl group onto the adenine at position 37 in tRNAs that read codons beginning with uridine, leading to the formation of N6-(dimethylallyl)adenosine (i(6)A). The polypeptide is tRNA dimethylallyltransferase (Listeria monocytogenes serotype 4a (strain HCC23)).